The sequence spans 478 residues: Protein nucleotidyltransferase YdiU (478 aa).

ATP-binding residues include Gly-84, Gly-86, Arg-87, Lys-107, Asp-119, Gly-120, Arg-170, and Arg-177. Asp-246 serves as the catalytic Proton acceptor. Mg(2+) contacts are provided by Asn-247 and Asp-256. Asp-256 is a binding site for ATP.

The protein belongs to the SELO family. Mg(2+) serves as cofactor. The cofactor is Mn(2+).

The enzyme catalyses L-seryl-[protein] + ATP = 3-O-(5'-adenylyl)-L-seryl-[protein] + diphosphate. It catalyses the reaction L-threonyl-[protein] + ATP = 3-O-(5'-adenylyl)-L-threonyl-[protein] + diphosphate. The catalysed reaction is L-tyrosyl-[protein] + ATP = O-(5'-adenylyl)-L-tyrosyl-[protein] + diphosphate. It carries out the reaction L-histidyl-[protein] + UTP = N(tele)-(5'-uridylyl)-L-histidyl-[protein] + diphosphate. The enzyme catalyses L-seryl-[protein] + UTP = O-(5'-uridylyl)-L-seryl-[protein] + diphosphate. It catalyses the reaction L-tyrosyl-[protein] + UTP = O-(5'-uridylyl)-L-tyrosyl-[protein] + diphosphate. Its function is as follows. Nucleotidyltransferase involved in the post-translational modification of proteins. It can catalyze the addition of adenosine monophosphate (AMP) or uridine monophosphate (UMP) to a protein, resulting in modifications known as AMPylation and UMPylation. The polypeptide is Protein nucleotidyltransferase YdiU (Escherichia coli (strain SE11)).